Consider the following 335-residue polypeptide: Heme A synthase (335 aa).

A run of 8 helical transmembrane segments spans residues 9 to 29 (VAIWLFLCSIMIVLMVGIGGF), 90 to 110 (YVHRLFARLTGLIFILPFIYF), 120 to 140 (VVIRLSIALSFGVLQAFTGWY), 156 to 176 (MLTLHLLLALVIFALLSYQFF), 197 to 217 (VGIILILIVVQIIFGAFVAGL), 255 to 275 (VQFIHRTLALLILVLTTVLTI), 283 to 303 (VYVMLLSVIIQIILGVVTLLL), and 309 to 329 (IAISHQMFSFILFGSGLCFLC). Residue His259 coordinates heme. Heme is bound at residue His313.

The protein belongs to the COX15/CtaA family. Type 2 subfamily. Interacts with CtaB. Heme b is required as a cofactor.

Its subcellular location is the cell membrane. The catalysed reaction is Fe(II)-heme o + 2 A + H2O = Fe(II)-heme a + 2 AH2. The protein operates within porphyrin-containing compound metabolism; heme A biosynthesis; heme A from heme O: step 1/1. Functionally, catalyzes the conversion of heme O to heme A by two successive hydroxylations of the methyl group at C8. The first hydroxylation forms heme I, the second hydroxylation results in an unstable dihydroxymethyl group, which spontaneously dehydrates, resulting in the formyl group of heme A. This is Heme A synthase from Wolbachia sp. subsp. Brugia malayi (strain TRS).